Here is a 249-residue protein sequence, read N- to C-terminus: Triosephosphate isomerase (249 aa).

Substrate is bound by residues Asn12 and Lys14. Lys14 bears the N6-acetyllysine mark. Tyr68 bears the 3'-nitrotyrosine mark. Ser80 is modified (phosphoserine). His96 (electrophile) is an active-site residue. Residue Ser106 is modified to Phosphoserine. Residue Lys142 forms a Glycyl lysine isopeptide (Lys-Gly) (interchain with G-Cter in SUMO1) linkage. The residue at position 149 (Lys149) is an N6-succinyllysine. Lys156 is subject to N6-acetyllysine; alternate. Lys156 carries the N6-succinyllysine; alternate modification. A Phosphoserine modification is found at Ser159. Glu166 acts as the Proton acceptor in catalysis. A Phosphothreonine modification is found at Thr173. Lys194 is modified (N6-acetyllysine; alternate). An N6-succinyllysine; alternate modification is found at Lys194. The residue at position 194 (Lys194) is an N6-methyllysine; alternate. A Phosphoserine modification is found at Ser198. The residue at position 209 (Tyr209) is a 3'-nitrotyrosine. A Phosphoserine modification is found at Ser212. Position 214 is a phosphothreonine (Thr214). Phosphoserine is present on Ser223. Lys238 bears the N6-acetyllysine mark.

Belongs to the triosephosphate isomerase family. Homodimer.

It is found in the cytoplasm. It carries out the reaction dihydroxyacetone phosphate = methylglyoxal + phosphate. It catalyses the reaction D-glyceraldehyde 3-phosphate = dihydroxyacetone phosphate. Its pathway is carbohydrate degradation; glycolysis; D-glyceraldehyde 3-phosphate from glycerone phosphate: step 1/1. It participates in carbohydrate biosynthesis; gluconeogenesis. Triosephosphate isomerase is an extremely efficient metabolic enzyme that catalyzes the interconversion between dihydroxyacetone phosphate (DHAP) and D-glyceraldehyde-3-phosphate (G3P) in glycolysis and gluconeogenesis. Functionally, it is also responsible for the non-negligible production of methylglyoxal a reactive cytotoxic side-product that modifies and can alter proteins, DNA and lipids. The polypeptide is Triosephosphate isomerase (TPI1) (Macaca fascicularis (Crab-eating macaque)).